Consider the following 64-residue polypeptide: Large ribosomal subunit protein bL35 (64 aa).

Residues 1-42 (MPKAKTHSGASKRFRRTGTGKIVRQKANRRHLLEHKSSKRTR) are compositionally biased toward basic residues. The interval 1–64 (MPKAKTHSGA…TKRVKSLLNG (64 aa)) is disordered.

Belongs to the bacterial ribosomal protein bL35 family.

The chain is Large ribosomal subunit protein bL35 from Mycobacterium ulcerans (strain Agy99).